The following is a 90-amino-acid chain: uncharacterized protein (90 aa).

This is an uncharacterized protein from Saccharomyces cerevisiae (strain ATCC 204508 / S288c) (Baker's yeast).